Reading from the N-terminus, the 1335-residue chain is Phospholipid-transporting ATPase IK (1335 aa).

The Cytoplasmic portion of the chain corresponds to Met-1–Asn-74. A helical membrane pass occupies residues Leu-75–Phe-95. Topologically, residues Thr-96–Ala-295 are exoplasmic loop. The helical transmembrane segment at Leu-296–Val-316 threads the bilayer. The Cytoplasmic portion of the chain corresponds to Lys-317–Phe-339. A helical transmembrane segment spans residues Phe-340 to Ile-360. Residues Ala-361 to Tyr-917 are Exoplasmic loop-facing. The active-site 4-aspartylphosphate intermediate is the Asp-407. The ATP site is built by Asp-407, Lys-408, Thr-409, Glu-504, Phe-545, Lys-568, Arg-601, Thr-681, Gly-682, Asp-683, Arg-831, and Lys-837. Asp-407 is a binding site for Mg(2+). Residue Thr-409 participates in Mg(2+) binding. Mg(2+) is bound at residue Asp-857. Residues Asn-860 and Asp-861 each coordinate ATP. Residue Asp-861 participates in Mg(2+) binding. A helical membrane pass occupies residues Phe-918 to Phe-938. Topologically, residues Ser-939–Gly-946 are cytoplasmic. Residues Trp-947–Phe-967 traverse the membrane as a helical segment. Topologically, residues Glu-968–Ser-995 are exoplasmic loop. Residues Ile-996–Val-1016 traverse the membrane as a helical segment. The Cytoplasmic segment spans residues Met-1017–Ser-1033. The helical transmembrane segment at Leu-1034–Val-1054 threads the bilayer. A topological domain (exoplasmic loop) is located at residue Lys-1055. The helical transmembrane segment at Tyr-1056 to Thr-1076 threads the bilayer. Topologically, residues Ser-1077 to Glu-1104 are cytoplasmic. Residues Pro-1105–Leu-1125 traverse the membrane as a helical segment. At Arg-1126–Ser-1335 the chain is on the exoplasmic loop side. Disordered regions lie at residues Val-1192–Asn-1215, Phe-1236–Leu-1280, and Ser-1314–Ser-1335. Composition is skewed to polar residues over residues Pro-1246–Lys-1255 and Gln-1266–Ser-1276.

It belongs to the cation transport ATPase (P-type) (TC 3.A.3) family. Type IV subfamily. Mg(2+) is required as a cofactor. Expressed in testis, specifically in spermatids within seminiferous tubules (at protein level).

Its subcellular location is the cytoplasmic vesicle. The protein resides in the secretory vesicle. It localises to the acrosome membrane. The protein localises to the endoplasmic reticulum membrane. The enzyme catalyses ATP + H2O + phospholipidSide 1 = ADP + phosphate + phospholipidSide 2.. It catalyses the reaction a 1,2-diacyl-sn-glycero-3-phospho-L-serine(out) + ATP + H2O = a 1,2-diacyl-sn-glycero-3-phospho-L-serine(in) + ADP + phosphate + H(+). In terms of biological role, P4-ATPase flippase which catalyzes the hydrolysis of ATP coupled to the transport of aminophospholipids from the outer to the inner leaflet of various membranes and ensures the maintenance of asymmetric distribution of phospholipids. Phospholipid translocation also seems to be implicated in vesicle formation and in uptake of lipid signaling molecules. May be responsible for the maintenance of asymmetric distribution of phosphatidylserine (PS) in spermatozoa membranes. Involved in acrosome reactions and binding of spermatozoa to zona pellucida. The sequence is that of Phospholipid-transporting ATPase IK from Mus musculus (Mouse).